The sequence spans 257 residues: MLILISPAKTLDYQSPLATERYTQPELLDHSQQLIREARKLSAPQIGKLMSISDKLADLNATRFHDWQPDFTPKNARQAILAFKGDVYTGLQAEEFSEADFDFAQQHLRMLSGLYGVLRPLDLMQPYRLEMGIRLENAKGKDLYQFWGDIITEKLNDALKAQGDNIVINLASDEYYRSVKPKKLNAEIIKPVFLDEKKGKFKVISFYAKKARGLMSRYIIENRLTKPEQLTAFNSEGYFFDGDASEKGELVFKRHEQ.

This sequence belongs to the UPF0246 family.

The protein is UPF0246 protein Ent638_0568 of Enterobacter sp. (strain 638).